The chain runs to 354 residues: Membrane progestin receptor beta (354 aa).

Over 1–75 the chain is Cytoplasmic; it reads MTTAILQRLS…FFSLFQKHNE (75 aa). Residues 76–96 form a helical membrane-spanning segment; that stretch reads VVNVWTHLLAALAVLLRFWAF. Over 97–111 the chain is Extracellular; that stretch reads VETEGLPWTSAHTLP. Residues 112 to 132 traverse the membrane as a helical segment; sequence LLLYVLSSITYLTFSLLAHLL. The Cytoplasmic portion of the chain corresponds to 133–174; it reads QSKSELSHYTFYFVDYVGVSVYQYGSALVHFFYASDQAWYER. A helical membrane pass occupies residues 175–195; it reads FWLFFLPAAAFCGWLSCTGCC. At 196–213 the chain is on the extracellular side; it reads YAKYRYRRPYPVMRKVCQ. Residues 214–234 form a helical membrane-spanning segment; that stretch reads VVPAGLAFILDISPVAHRVAL. Over 235–243 the chain is Cytoplasmic; it reads CHLSGCQEQ. The helical transmembrane segment at 244-264 threads the bilayer; it reads AAWYHTLQIVFFLVSAYFFSC. Topologically, residues 265–283 are extracellular; it reads PVPEKYFPGSCDIVGHGHQ. A helical transmembrane segment spans residues 284 to 304; the sequence is IFHAFLSICTLSQLEAILLDY. At 305-319 the chain is on the cytoplasmic side; sequence KGRQEIFLHRHSPLS. A helical transmembrane segment spans residues 320 to 340; that stretch reads IYAACLSFFFLVACSGATAAL. Residues 341–354 are Extracellular-facing; that stretch reads LREKIKARLSKKDS.

Belongs to the ADIPOR family.

It localises to the cell membrane. Its function is as follows. Steroid membrane receptor. Binds progesterone. May be involved in oocyte maturation. The sequence is that of Membrane progestin receptor beta (PAQR8) from Sus scrofa (Pig).